The chain runs to 1581 residues: Mediator of RNA polymerase II transcription subunit 1 (1581 aa).

The interval 1 to 670 (MKAQGETEES…YGSSPLERQN (670 aa)) is interaction with the Mediator complex and THRA. Residues 16–590 (MSSLLERLHA…SIKDRHESVG (575 aa)) are interaction with ESR1. Interaction with the Mediator complex regions lie at residues 108–212 (FYVE…GYLT) and 215–390 (SGGH…SLQG). Residues 405–644 (PLILNLIRHQ…MAGNTKNHPM (240 aa)) are interaction with THRA. The segment at 542-788 (PASSPGYGMT…TDILSDIAEE (247 aa)) is interaction with VDR. At S588 the chain carries Phosphoserine. The short motif at 604 to 608 (LTSLL) is the LXXLL motif 1 element. Disordered stretches follow at residues 609–705 (QITG…HQTE), 791–819 (KLPSTSDDCPAIGTPLRDSSSSGHSQSTL), 868–895 (LSNSQSQSGFGEEYFDESSQSGDNDDFK), and 947–1566 (EHHS…DFMI). A compositionally biased stretch (pro residues) spans 622-632 (PTPPHHTPPPV). Positions 622–701 (PTPPHHTPPP…SSRLPPEKPK (80 aa)) are interaction with PPARGC1A and THRA. An LXXLL motif 2 motif is present at residues 645 to 649 (LMNLL). Over residues 655–675 (QDFSTLYGSSPLERQNSSSGS) the composition is skewed to polar residues. The segment at 656–1065 (DFSTLYGSSP…TPPIPKITIQ (410 aa)) is interaction with ESR1. Phosphoserine is present on S664. Residues 681-715 (CSGSNKTKKKESSRLPPEKPKHQTEDDFQRELFSM) form an interaction with GATA1 region. Positions 690–705 (KESSRLPPEKPKHQTE) are enriched in basic and acidic residues. Residue S794 is modified to Phosphoserine. T804 is modified (phosphothreonine). Residues 807–819 (RDSSSSGHSQSTL) are compositionally biased toward polar residues. The Integrase domain-binding motif (IBM) motif lies at 874 to 901 (QSGFGEEYFDESSQSGDNDDFKGFASQA). 2 positions are modified to phosphoserine: S886 and S952. Positions 962–973 (LGKEKTQKRVKE) are enriched in basic and acidic residues. Position 1031 is a phosphothreonine; by MAPK1 or MAPK3 (T1031). Over residues 1033 to 1050 (PTSTGGSKSPGSSGRSQT) the composition is skewed to low complexity. 2 positions are modified to phosphothreonine: T1050 and T1056. Low complexity-rich tracts occupy residues 1077–1093 (SSHSQYTSSGSVSSSGS), 1100–1111 (SSSSSSSSASTS), and 1119–1156 (SEGSSSSKLSSSMYSSQGSSGSSQSKNSSQSGGKPGSS). S1156 carries the phosphoserine modification. Residues 1162–1195 (GLSSGSSSTKMKPQGKPSSLMNPSLSKPNISPSH) are compositionally biased toward polar residues. N6-acetyllysine is present on K1177. S1207 is subject to Phosphoserine. T1215 is subject to Phosphothreonine. Composition is skewed to low complexity over residues 1218 to 1227 (SSKAKSPISS) and 1234 to 1293 (MSGT…SKGK). S1223 is subject to Phosphoserine. An interaction with TP53 region spans residues 1249 to 1421 (LGSSGSLSQK…KPGESSGEGL (173 aa)). Residue S1302 is modified to Phosphoserine. Over residues 1330-1345 (GVSTNSSSHPMSSKHN) the composition is skewed to polar residues. S1347 is modified (phosphoserine). Residues 1352-1364 (QGKREKSDKDKSK) show a composition bias toward basic and acidic residues. S1403 and S1433 each carry phosphoserine. Polar residues-rich tracts occupy residues 1425-1440 (MASSKNYGSPLISGST) and 1448-1482 (PSHSKSPAYTPQNLDSESESGSSIAEKSYQNSPSS). At T1440 the chain carries Phosphothreonine. Phosphothreonine; by MAPK1 or MAPK3 is present on T1457. A phosphoserine mark is found at S1463, S1465, S1479, S1481, and S1482. Residues 1496–1505 (KHKKHKKEKK) are compositionally biased toward basic residues. Over residues 1506 to 1522 (KVKDKDRDRDRDKDRDK) the composition is skewed to basic and acidic residues. K1529 carries the N6-acetyllysine modification. Positions 1533 to 1552 (WSKSPISSDQSLSMTSNTIL) are enriched in polar residues.

This sequence belongs to the Mediator complex subunit 1 family. As to quaternary structure, component of the Mediator complex, which is composed of MED1, MED4, MED6, MED7, MED8, MED9, MED10, MED11, MED12, MED13, MED13L, MED14, MED15, MED16, MED17, MED18, MED19, MED20, MED21, MED22, MED23, MED24, MED25, MED26, MED27, MED29, MED30, MED31, CCNC, CDK8 and CDC2L6/CDK11. The MED12, MED13, CCNC and CDK8 subunits form a distinct module termed the CDK8 module. Mediator containing the CDK8 module is less active than Mediator lacking this module in supporting transcriptional activation. Individual preparations of the Mediator complex lacking one or more distinct subunits have been variously termed ARC, CRSP, DRIP, PC2, SMCC and TRAP. This subunit specifically interacts with a number of nuclear receptors in a ligand-dependent fashion including AR, ESR1, ESR2, PPARA, PPARG, RORA, RXRA, RXRG, THRA, THRB and VDR. Interacts with CTNNB1, GABPA, GLI3, PPARGC1A and TP53. Interacts with GATA1 and YWHAH. Interacts with CLOCK; this interaction requires the presence of THRAP3. Interacts with CCAR1. Interacts with NR4A3. Interacts (via IBM motif) with PSIP1 (via IBD domain); phosphorylation increases its affinity for PSIP1. Interacts with USP22. In terms of processing, phosphorylated by MAPK1 or MAPK3 during G2/M phase which may enhance protein stability and promote entry into the nucleolus. Phosphorylation increases its interaction with PSIP1.

The protein resides in the nucleus. Functionally, component of the Mediator complex, a coactivator involved in the regulated transcription of nearly all RNA polymerase II-dependent genes. Mediator functions as a bridge to convey information from gene-specific regulatory proteins to the basal RNA polymerase II transcription machinery. Mediator is recruited to promoters by direct interactions with regulatory proteins and serves as a scaffold for the assembly of a functional preinitiation complex with RNA polymerase II and the general transcription factors. Acts as a coactivator for GATA1-mediated transcriptional activation during erythroid differentiation of K562 erythroleukemia cells. This is Mediator of RNA polymerase II transcription subunit 1 (MED1) from Pongo abelii (Sumatran orangutan).